A 71-amino-acid polypeptide reads, in one-letter code: Sec-independent protein translocase protein TatA (71 aa).

Residues 1–21 (MGSFSLLHWLVVLVIVLLVFG) traverse the membrane as a helical segment. The interval 43–71 (LREDDKPTDQLGSTSQSTASGPQQDHGKH) is disordered. Positions 52–65 (QLGSTSQSTASGPQ) are enriched in polar residues.

It belongs to the TatA/E family. The Tat system comprises two distinct complexes: a TatABC complex, containing multiple copies of TatA, TatB and TatC subunits, and a separate TatA complex, containing only TatA subunits. Substrates initially bind to the TatABC complex, which probably triggers association of the separate TatA complex to form the active translocon.

It localises to the cell inner membrane. Part of the twin-arginine translocation (Tat) system that transports large folded proteins containing a characteristic twin-arginine motif in their signal peptide across membranes. TatA could form the protein-conducting channel of the Tat system. In Xylella fastidiosa (strain 9a5c), this protein is Sec-independent protein translocase protein TatA.